The following is a 512-amino-acid chain: Mesoderm induction early response protein 1 (512 aa).

The segment covering 1-16 (MAEPSVESSSPGGSAT) has biased composition (low complexity). Disordered regions lie at residues 1–63 (MAEP…REGD) and 75–173 (YGST…EDYI). The residue at position 10 (serine 10) is a Phosphoserine. Positions 17-36 (SDDHEFDPSADMLVHDFDDE) are enriched in basic and acidic residues. 2 stretches are compositionally biased toward acidic residues: residues 37–46 (RTLEEEEMME) and 83–105 (EEDE…DNDD). A compositionally biased stretch (polar residues) spans 129-144 (QSSNDDPSQSVASQDA). Phosphoserine is present on serine 141. Tyrosine 155 is modified (phosphotyrosine). Serine 160 and serine 166 each carry phosphoserine. Residues 160 to 173 (SEVEEESEEDEDYI) are compositionally biased toward acidic residues. Residues 180–278 (KEIMVGSMFQ…EALRRLRFNV (99 aa)) form the ELM2 domain. Residues 180–284 (KEIMVGSMFQ…RFNVKAAREE (105 aa)) are interaction with HDAC1. A Glycyl lysine isopeptide (Lys-Gly) (interchain with G-Cter in SUMO2) cross-link involves residue lysine 239. Positions 283 to 335 (EELSVWTEEECRNFEQGLKAYGKDFHLIQANKVRTRSVGECVAFYYMWKKSER) constitute an SANT domain. The interval 366 to 512 (ESESAASSRA…KFEELENTDD (147 aa)) is disordered. Phosphoserine occurs at positions 367, 369, and 377. Residues 396–409 (TVSTTNQNGVSSNG) show a composition bias toward polar residues. Over residues 414-423 (LNKEEVKVEG) the composition is skewed to basic and acidic residues. Lysine 420 is covalently cross-linked (Glycyl lysine isopeptide (Lys-Gly) (interchain with G-Cter in SUMO2)). Threonine 448 carries the phosphothreonine modification. Over residues 462 to 475 (ARNENDFDEKSERP) the composition is skewed to basic and acidic residues. The segment covering 482–494 (NSNGKESPGSSEF) has biased composition (polar residues). Residues serine 483, serine 488, and serine 491 each carry the phosphoserine modification.

Interacts with HDAC1. Part of a complex containing at least CDYL, MIER1, MIER2, HDAC1 and HDAC2.

The protein resides in the nucleus. Transcriptional repressor regulating the expression of a number of genes including SP1 target genes. Probably functions through recruitment of HDAC1 a histone deacetylase involved in chromatin silencing. This is Mesoderm induction early response protein 1 (MIER1) from Pongo abelii (Sumatran orangutan).